We begin with the raw amino-acid sequence, 144 residues long: Effector EagT6 (144 aa).

Homodimer. Two dimers interact with Tse6; this interaction is crucial for Tse6 loading onto VgrG1a.

Functionally, plays an essential role in toxin Tse6 delivery to target cells and specifically in the loading of Tse6 onto VgrG1a. This Pseudomonas aeruginosa (strain ATCC 15692 / DSM 22644 / CIP 104116 / JCM 14847 / LMG 12228 / 1C / PRS 101 / PAO1) protein is Effector EagT6.